Here is a 325-residue protein sequence, read N- to C-terminus: GMP reductase (325 aa).

Cysteine 174 serves as the catalytic Thioimidate intermediate. Isoleucine 203–valine 226 is a binding site for NADP(+).

The protein belongs to the IMPDH/GMPR family. GuaC type 2 subfamily.

The enzyme catalyses IMP + NH4(+) + NADP(+) = GMP + NADPH + 2 H(+). Functionally, catalyzes the irreversible NADPH-dependent deamination of GMP to IMP. It functions in the conversion of nucleobase, nucleoside and nucleotide derivatives of G to A nucleotides, and in maintaining the intracellular balance of A and G nucleotides. The sequence is that of GMP reductase from Helicobacter pylori (strain G27).